The chain runs to 144 residues: uncharacterized protein (144 aa).

Positions Glu23 to Lys82 form a coiled coil.

This is an uncharacterized protein from Acanthamoeba polyphaga mimivirus (APMV).